A 776-amino-acid chain; its full sequence is Ribosomal RNA large subunit methyltransferase K/L (776 aa).

A THUMP domain is found at 68–183; sequence DLYKICLWSR…DKQAELYLDL (116 aa).

Belongs to the methyltransferase superfamily. RlmKL family.

The protein resides in the cytoplasm. It carries out the reaction guanosine(2445) in 23S rRNA + S-adenosyl-L-methionine = N(2)-methylguanosine(2445) in 23S rRNA + S-adenosyl-L-homocysteine + H(+). The enzyme catalyses guanosine(2069) in 23S rRNA + S-adenosyl-L-methionine = N(2)-methylguanosine(2069) in 23S rRNA + S-adenosyl-L-homocysteine + H(+). Functionally, specifically methylates the guanine in position 2445 (m2G2445) and the guanine in position 2069 (m7G2069) of 23S rRNA. This is Ribosomal RNA large subunit methyltransferase K/L from Psychrobacter cryohalolentis (strain ATCC BAA-1226 / DSM 17306 / VKM B-2378 / K5).